Here is a 333-residue protein sequence, read N- to C-terminus: Cap-specific mRNA (nucleoside-2'-O-)-methyltransferase (333 aa).

Residue Tyr-22 participates in mRNA binding. Residues Gln-39, Tyr-66, Gly-68, Gly-72, Asp-95, Arg-97, Val-116, and Asp-138 each coordinate S-adenosyl-L-methionine. A binding to NPH-I region spans residues 169-249; sequence PVASSLKWRC…NKIVRNKVVV (81 aa). The tract at residues 169 to 333 is binding to Rap94; it reads PVASSLKWRC…NSKRSVRGNK (165 aa). Lys-175 functions as the For methyltransferase activity in the catalytic mechanism. MRNA-binding positions include 177-180, Asp-182, 205-207, and Glu-233; these read RCPF and SAE.

It belongs to the class I-like SAM-binding methyltransferase superfamily. Poxvirus/kinetoplastid 2'-O-MTase family. Interacts with poly(A) polymerase catalytic subunit OPG063. Interacts with OPG109 and OPG123; these interactions might help linking transcription to capping and polyadenylation.

It localises to the virion. The catalysed reaction is a 5'-end (N(7)-methyl 5'-triphosphoguanosine)-ribonucleoside in mRNA + S-adenosyl-L-methionine = a 5'-end (N(7)-methyl 5'-triphosphoguanosine)-(2'-O-methyl-ribonucleoside) in mRNA + S-adenosyl-L-homocysteine + H(+). Its function is as follows. Displays methyltransferase, positive regulation of the poly(A) polymerase and transcription elongation activities. Involved in the modification of both mRNA ends and in intermediate and late gene positive transcription elongation. At the mRNAs 5' end, methylates the ribose 2' OH group of the first transcribed nucleotide, thereby producing a 2'-O-methylpurine cap. At the 3' end, functions as a processivity factor which stimulates the activity of the viral poly(A) polymerase OPG063 that creates mRNA's poly(A) tail. In the presence of OPG102, OPG063 does not dissociate from the RNA allowing tail elongation to around 250 adenylates. This Homo sapiens (Human) protein is Cap-specific mRNA (nucleoside-2'-O-)-methyltransferase (OPG102).